Here is a 47-residue protein sequence, read N- to C-terminus: Delta-halcutoxin-Hcg1a (47 aa).

Cystine bridges form between Cys3–Cys43, Cys5–Cys33, and Cys26–Cys44.

The protein belongs to the sea anemone sodium channel inhibitory toxin family. Type II subfamily.

Its subcellular location is the secreted. The protein localises to the nematocyst. In terms of biological role, is potently lethal to crabs, although it showed neither lethal activity in mice nor hemolytic activity. May bind to voltage-gated sodium channels (Nav), thereby delaying their inactivation during signal transduction. In Isohalcurias carlgreni (Sea anemone), this protein is Delta-halcutoxin-Hcg1a.